The primary structure comprises 259 residues: Probable ABC transporter permease protein RT0041 (259 aa).

5 helical membrane-spanning segments follow: residues 20–40 (VGIF…PPLY), 49–69 (LFIG…SGAV), 148–168 (VIAA…IGVM), 195–215 (LIDV…ISII), and 237–257 (AVVN…ELLF).

Belongs to the MlaE permease family.

Its subcellular location is the cell inner membrane. Could be part of an ABC transporter complex. In Rickettsia typhi (strain ATCC VR-144 / Wilmington), this protein is Probable ABC transporter permease protein RT0041.